A 249-amino-acid polypeptide reads, in one-letter code: 5'-nucleotidase SurE (249 aa).

The a divalent metal cation site is built by Asp8, Asp9, Ser39, and Asn91.

Belongs to the SurE nucleotidase family. Requires a divalent metal cation as cofactor.

The protein resides in the cytoplasm. It carries out the reaction a ribonucleoside 5'-phosphate + H2O = a ribonucleoside + phosphate. In terms of biological role, nucleotidase that shows phosphatase activity on nucleoside 5'-monophosphates. In Pseudomonas putida (strain W619), this protein is 5'-nucleotidase SurE.